Consider the following 333-residue polypeptide: Autoinducer 2 import system permease protein LsrD (333 aa).

10 consecutive transmembrane segments (helical) span residues Tyr7–Ser27, Ile45–Ile65, Phe67–Pro87, Val90–Ile110, Leu118–Leu138, Leu162–Leu182, Thr212–Val232, Ser240–Asn260, Ile261–Leu281, and Ile288–Val308.

This sequence belongs to the binding-protein-dependent transport system permease family. AraH/RbsC subfamily. As to quaternary structure, the complex is composed of two ATP-binding proteins (LsrA), two transmembrane proteins (LsrC and LsrD) and a solute-binding protein (LsrB).

The protein resides in the cell inner membrane. Functionally, part of the ABC transporter complex LsrABCD involved in autoinducer 2 (AI-2) import. Probably responsible for the translocation of the substrate across the membrane. The chain is Autoinducer 2 import system permease protein LsrD (lsrD) from Yersinia pseudotuberculosis serotype I (strain IP32953).